A 594-amino-acid polypeptide reads, in one-letter code: Putative phospholipase B-like 2 (594 aa).

The first 46 residues, 1–46 (MAAPVDGSSGGWAARALRRALALTSLTTLALLASLTGLLLSGPAGA), serve as a signal peptide directing secretion. N-linked (GlcNAc...) asparagine glycans are attached at residues Asn93 and Asn115. A disulfide bridge links Cys147 with Cys157. Residues Asn236 and Asn441 are each glycosylated (N-linked (GlcNAc...) asparagine). The cysteines at positions 497 and 500 are disulfide-linked. N-linked (GlcNAc...) asparagine glycosylation is present at Asn520.

Belongs to the phospholipase B-like family. Interacts with IGF2R. The p76 protein is synthesized as a 76 kDa precursor which is then processed into a N-terminal 28 kDa form and a C-terminal 40 kDa form. The C-terminal peptide is further processed into a 15 kDa form. Post-translationally, glycosylated; contains mannose 6-phosphate sugars. In terms of tissue distribution, present at highest levels in spleen, lung and brain (at protein level).

The protein resides in the lysosome lumen. Putative phospholipase. The polypeptide is Putative phospholipase B-like 2 (Plbd2) (Mus musculus (Mouse)).